A 210-amino-acid chain; its full sequence is MKVFKIPEATIMRLSIYSRYLRQLIEEGVETVSSGEIAAGVGVSSAQVRKDLAYFGEFGTRGVGYKVEDLYGCLLKILGLDRRWNIIIIGAGKLGSAFALYQGFLDRGFTISAIMDVDEKIIGSELDGVKIEPLELLQQRVTEKNITVGVITVPAPAAQDVTDLLVASGVKAILNFSPRVLKVPNDVILRNVDLSVNLELLSFYLALNNR.

The H-T-H motif DNA-binding region spans 16–55 (IYSRYLRQLIEEGVETVSSGEIAAGVGVSSAQVRKDLAYF). 90-95 (GAGKLG) contacts NAD(+).

The protein belongs to the transcriptional regulatory Rex family. Homodimer.

The protein localises to the cytoplasm. In terms of biological role, modulates transcription in response to changes in cellular NADH/NAD(+) redox state. This Syntrophomonas wolfei subsp. wolfei (strain DSM 2245B / Goettingen) protein is Redox-sensing transcriptional repressor Rex.